A 232-amino-acid polypeptide reads, in one-letter code: Lipoprotein-releasing system ATP-binding protein LolD 2 (232 aa).

Positions 11–231 constitute an ABC transporter domain; the sequence is VYLHDIKRQY…SLQDGVVVEL (221 aa). 47 to 54 is a binding site for ATP; the sequence is APSGSGKS.

The protein belongs to the ABC transporter superfamily. Lipoprotein translocase (TC 3.A.1.125) family. As to quaternary structure, the complex is composed of two ATP-binding proteins (LolD) and two transmembrane proteins (LolC and LolE).

The protein resides in the cell inner membrane. Its function is as follows. Part of the ABC transporter complex LolCDE involved in the translocation of mature outer membrane-directed lipoproteins, from the inner membrane to the periplasmic chaperone, LolA. Responsible for the formation of the LolA-lipoprotein complex in an ATP-dependent manner. The polypeptide is Lipoprotein-releasing system ATP-binding protein LolD 2 (Rhodopseudomonas palustris (strain ATCC BAA-98 / CGA009)).